The sequence spans 307 residues: Tyrosine recombinase XerC (307 aa).

The Core-binding (CB) domain maps to 9 to 95 (ETLSLAIDSF…ALRSFLDWQV (87 aa)). Residues 116–296 (HLPKNMDVDE…DFQHLAKVYD (181 aa)) form the Tyr recombinase domain. Active-site residues include arginine 155, lysine 179, histidine 248, arginine 251, and histidine 274. Tyrosine 283 functions as the O-(3'-phospho-DNA)-tyrosine intermediate in the catalytic mechanism.

Belongs to the 'phage' integrase family. XerC subfamily. Forms a cyclic heterotetrameric complex composed of two molecules of XerC and two molecules of XerD, in which XerC interacts with XerD via its C-terminal region, XerD interacts with XerC via its C-terminal region and so on.

It is found in the cytoplasm. Its activity is regulated as follows. FtsK may regulate the catalytic switch between XerC and XerD in the heterotetrameric complex during the two steps of the recombination process. Its function is as follows. Site-specific tyrosine recombinase, which acts by catalyzing the cutting and rejoining of the recombining DNA molecules. Binds cooperatively to specific DNA consensus sequences that are separated from XerD binding sites by a short central region, forming the heterotetrameric XerC-XerD complex that recombines DNA substrates. The complex is essential to convert dimers of the bacterial chromosome into monomers to permit their segregation at cell division. It also contributes to the segregational stability of plasmids. In the complex XerC specifically exchanges the top DNA strands. The sequence is that of Tyrosine recombinase XerC from Proteus mirabilis.